The following is a 66-amino-acid chain: COP-associated protein (66 aa).

An HMA domain is found at 1 to 66 (MKIDIPVKGM…AILDAGYELG (66 aa)). 2 residues coordinate Cu cation: Cys-12 and Cys-15.

In terms of biological role, part of a cation-transporting system which is associated with copper export out of the H.pylori cells. This chain is COP-associated protein (copP), found in Helicobacter felis (strain ATCC 49179 / CCUG 28539 / NCTC 12436 / CS1).